Reading from the N-terminus, the 894-residue chain is Sorting nexin-14 (894 aa).

One can recognise a PXA domain in the interval 78-252 (SSKVDASLSE…LLIIFIDDSP (175 aa)). The region spanning 284–416 (ELKQIREQQD…CHSDEYFRQL (133 aa)) is the RGS domain. A Phosphoserine modification is found at S496. Residues 518–638 (PYVDFFEDPS…DFLSPNGGET (121 aa)) enclose the PX domain.

Belongs to the sorting nexin family.

The protein resides in the cytoplasm. It localises to the cell projection. Its subcellular location is the dendrite. In terms of biological role, plays a role in maintaining normal neuronal excitability and synaptic transmission. May be involved in several stages of intracellular trafficking. The sequence is that of Sorting nexin-14 (SNX14) from Pongo abelii (Sumatran orangutan).